A 381-amino-acid chain; its full sequence is Homoserine O-succinyltransferase (381 aa).

One can recognise an AB hydrolase-1 domain in the interval 53–361 (ILICHALSGS…DSVHGHDAFL (309 aa)). Residue Ser157 is the Nucleophile of the active site. Arg227 is a binding site for substrate. Active-site residues include Asp324 and His357. A substrate-binding site is contributed by Asp358.

It belongs to the AB hydrolase superfamily. MetX family. As to quaternary structure, homodimer.

It is found in the cytoplasm. It catalyses the reaction L-homoserine + succinyl-CoA = O-succinyl-L-homoserine + CoA. It functions in the pathway amino-acid biosynthesis; L-methionine biosynthesis via de novo pathway; O-succinyl-L-homoserine from L-homoserine: step 1/1. Its function is as follows. Transfers a succinyl group from succinyl-CoA to L-homoserine, forming succinyl-L-homoserine. The sequence is that of Homoserine O-succinyltransferase from Saccharophagus degradans (strain 2-40 / ATCC 43961 / DSM 17024).